A 204-amino-acid polypeptide reads, in one-letter code: Transcription initiation factor TFIID subunit 11b (204 aa).

Residues 38-60 are disordered; it reads PFEAAMEEQEESPVETEQTLEGD. The span at 42 to 58 shows a compositional bias: acidic residues; that stretch reads AMEEQEESPVETEQTLE. One can recognise a Histone-fold domain in the interval 106-195; it reads FTEEQMSRYE…RRLKLQGKVP (90 aa).

The protein belongs to the TAF11 family. In terms of assembly, component of the TFIID complex. TFIID is composed of TATA binding protein (TBP) and a number of TBP-associated factors (TAFs) whose MWs range from 14-217 kDa. As to expression, expressed in roots, leaves and inflorescences.

Its subcellular location is the nucleus. Functionally, TAFs are components of the transcription factor IID (TFIID) complex that is essential for mediating regulation of RNA polymerase transcription. In Arabidopsis thaliana (Mouse-ear cress), this protein is Transcription initiation factor TFIID subunit 11b (TAF11B).